The primary structure comprises 31 residues: QRQCQNVQNCYKYCMSPKKCEYGTCYCEPSP.

Residue Gln-1 is modified to Pyrrolidone carboxylic acid. 3 disulfides stabilise this stretch: Cys-4–Cys-20, Cys-10–Cys-25, and Cys-14–Cys-27. A Proline amide modification is found at Pro-31.

This sequence belongs to the short scorpion toxin superfamily. Potassium channel inhibitor family. Alpha-KTx 17 subfamily. The N-terminus is blocked. Expressed by the venom gland.

It is found in the secreted. Functionally, blocker of potassium channels (Kv). This is Toxin BmKK12 from Olivierus martensii (Manchurian scorpion).